Reading from the N-terminus, the 223-residue chain is Deoxyribose-phosphate aldolase (223 aa).

The Proton donor/acceptor role is filled by aspartate 89. Lysine 152 acts as the Schiff-base intermediate with acetaldehyde in catalysis. Catalysis depends on lysine 181, which acts as the Proton donor/acceptor.

Belongs to the DeoC/FbaB aldolase family. DeoC type 1 subfamily.

The protein resides in the cytoplasm. The enzyme catalyses 2-deoxy-D-ribose 5-phosphate = D-glyceraldehyde 3-phosphate + acetaldehyde. Its pathway is carbohydrate degradation; 2-deoxy-D-ribose 1-phosphate degradation; D-glyceraldehyde 3-phosphate and acetaldehyde from 2-deoxy-alpha-D-ribose 1-phosphate: step 2/2. Catalyzes a reversible aldol reaction between acetaldehyde and D-glyceraldehyde 3-phosphate to generate 2-deoxy-D-ribose 5-phosphate. The chain is Deoxyribose-phosphate aldolase from Listeria monocytogenes serovar 1/2a (strain ATCC BAA-679 / EGD-e).